A 373-amino-acid polypeptide reads, in one-letter code: Chaperone protein DnaJ (373 aa).

The region spanning 4–68 (DFYEILGVSR…QARANYDRFG (65 aa)) is the J domain. The CR-type zinc finger occupies 132-214 (GGEKEIRINH…CGGQGHIQVS (83 aa)). Positions 145, 148, 162, 165, 188, 191, 202, and 205 each coordinate Zn(2+). CXXCXGXG motif repeat units follow at residues 145–152 (CKTCQGTG), 162–169 (CSTCGGVG), 188–195 (CPTCGGSG), and 202–209 (CESCGGQG).

Belongs to the DnaJ family. Homodimer. Zn(2+) is required as a cofactor.

It is found in the cytoplasm. In terms of biological role, participates actively in the response to hyperosmotic and heat shock by preventing the aggregation of stress-denatured proteins and by disaggregating proteins, also in an autonomous, DnaK-independent fashion. Unfolded proteins bind initially to DnaJ; upon interaction with the DnaJ-bound protein, DnaK hydrolyzes its bound ATP, resulting in the formation of a stable complex. GrpE releases ADP from DnaK; ATP binding to DnaK triggers the release of the substrate protein, thus completing the reaction cycle. Several rounds of ATP-dependent interactions between DnaJ, DnaK and GrpE are required for fully efficient folding. Also involved, together with DnaK and GrpE, in the DNA replication of plasmids through activation of initiation proteins. In Thermosynechococcus vestitus (strain NIES-2133 / IAM M-273 / BP-1), this protein is Chaperone protein DnaJ.